Consider the following 1368-residue polypeptide: Alpha-latrotoxin-Lg1a (1368 aa).

The tract at residues V217–L236 is helix H8 is the probable transmembrane region of the tetrameric pore inserted in the target cell membrane. A disulfide bridge connects residues C392 and C1044. 20 ANK repeats span residues Q469–Q500, K504–S533, F538–E568, D572–V601, K605–A635, N639–A669, G674–L704, G708–Q737, E741–A770, T774–E803, N807–I837, N841–T870, K874–I903, D907–W936, I953–S981, I982–G1011, K1013–H1042, N1046–R1075, L1079–I1109, and N1115–I1144. The interval K1174 to R1177 is furin-like endopeptidase recognition region. The propeptide occupies E1178–S1368.

The protein belongs to the cationic peptide 01 (latrotoxin) family. 03 (alpha-latrotoxin) subfamily. As to quaternary structure, homotetramer in membranes. In terms of tissue distribution, expressed in venom gland, cephalothorax, and abdomen tissues from both males and females.

It localises to the secreted. The protein resides in the target cell membrane. Functionally, presynaptic neurotoxin that causes massive release of neurotransmitters from vertebrate (but not invertebrate) nerve terminals and endocrine cells via a complex mechanism involving activation of receptor(s) and toxin insertion into the plasma membrane with subsequent pore formation. Binds to neurexin-1-alpha (NRXN1) in a calcium dependent manner, adhesion G protein-coupled receptor L1 (ADGRL1, also termed latrophilin-1 and calcium-independent receptor of latrotoxin (CIRL)), and receptor-type tyrosine-protein phosphatase S (PTPRS), also termed PTP sigma. NRXN1 and PTPRS are suggested to provide a platform for binding and subsequent pore formation events. In contrast, binding to ADGRL1 does not involve oligomerization and channel formation, but direct downstream stimulation of the synaptic fusion machinery. This chain is Alpha-latrotoxin-Lg1a, found in Latrodectus geometricus (Brown widow spider).